Reading from the N-terminus, the 264-residue chain is Hydroxyethylthiazole kinase (264 aa).

Met-52 contacts substrate. Residues Arg-127 and Thr-173 each coordinate ATP. Residue Gly-200 coordinates substrate.

It belongs to the Thz kinase family. Mg(2+) serves as cofactor.

It carries out the reaction 5-(2-hydroxyethyl)-4-methylthiazole + ATP = 4-methyl-5-(2-phosphooxyethyl)-thiazole + ADP + H(+). The protein operates within cofactor biosynthesis; thiamine diphosphate biosynthesis; 4-methyl-5-(2-phosphoethyl)-thiazole from 5-(2-hydroxyethyl)-4-methylthiazole: step 1/1. In terms of biological role, catalyzes the phosphorylation of the hydroxyl group of 4-methyl-5-beta-hydroxyethylthiazole (THZ). In Pectobacterium atrosepticum (strain SCRI 1043 / ATCC BAA-672) (Erwinia carotovora subsp. atroseptica), this protein is Hydroxyethylthiazole kinase.